Consider the following 1136-residue polypeptide: Coiled-coil domain-containing protein 136 (1136 aa).

The tract at residues 1–46 (MQAMDGEVLLPALYEEEEEEEEEEEEVEEEQVEKGGSLGSLSMGKH) is disordered. Over residues 14 to 31 (YEEEEEEEEEEEEVEEEQ) the composition is skewed to acidic residues. Ser-50 bears the Phosphoserine mark. Coiled coils occupy residues 293–631 (VMQL…QNQE) and 681–730 (LQAL…QTQS). Disordered stretches follow at residues 741 to 773 (GKNS…KSYV), 814 to 837 (GSVS…DPAE), 965 to 990 (NRPS…NGVR), and 1040 to 1111 (KKER…PDPP). The segment covering 743-752 (NSGSRAPSTE) has biased composition (polar residues). Residues 839–972 (EDLEHFEETV…KENRPSISSE (134 aa)) are a coiled coil. Positions 976-989 (KNVNKNMNKNANGV) are enriched in low complexity. Positions 1017–1057 (YYKASQRRLDELMKEEKEIEEARKKEREKKAKKDLCKLATN) form a coiled coil. Basic and acidic residues predominate over residues 1040–1052 (KKEREKKAKKDLC). Residues 1067–1091 (EPTEDEEENFEEYREGEDESCEAAE) are compositionally biased toward acidic residues. The chain crosses the membrane as a helical span at residues 1112–1132 (IFSLPLVGLVVISALLWCWWA).

Present at high level in testis (at protein level).

It is found in the cytoplasmic vesicle. Its subcellular location is the secretory vesicle. The protein localises to the acrosome membrane. May play a role in acrosome formation in spermatogenesis and in fertilization. This Mus musculus (Mouse) protein is Coiled-coil domain-containing protein 136 (Ccdc136).